A 186-amino-acid polypeptide reads, in one-letter code: Probable nicotinate-nucleotide adenylyltransferase (186 aa).

Belongs to the NadD family.

It catalyses the reaction nicotinate beta-D-ribonucleotide + ATP + H(+) = deamido-NAD(+) + diphosphate. Its pathway is cofactor biosynthesis; NAD(+) biosynthesis; deamido-NAD(+) from nicotinate D-ribonucleotide: step 1/1. Functionally, catalyzes the reversible adenylation of nicotinate mononucleotide (NaMN) to nicotinic acid adenine dinucleotide (NaAD). In Thermus thermophilus (strain ATCC BAA-163 / DSM 7039 / HB27), this protein is Probable nicotinate-nucleotide adenylyltransferase.